The following is a 370-amino-acid chain: 1-propanol dehydrogenase PduQ (370 aa).

Belongs to the iron-containing alcohol dehydrogenase family. In terms of assembly, interacts with PduP, probably via the N-terminus of PduQ. It depends on Fe cation as a cofactor.

It localises to the bacterial microcompartment. The enzyme catalyses 1-propanol + NAD(+) = propanal + NADH + H(+). The protein operates within polyol metabolism; 1,2-propanediol degradation. Functionally, an iron-dependent alcohol dehydrogenase required for optimal 1,2-propanediol (1,2-PD) degradation. NAD(+) and NADH are regenerated internally within the bacterial microcompartment (BMC) dedicated to 1,2-PD degradation by the PduP and PduQ enzymes, which reduce NAD(+) and oxidize NADH respectively, although there must also be cofactor transport across the BMC. In terms of biological role, expression of a cosmid containing the full 21-gene pdu operon in E.coli allows E.coli to grow on 1,2-propanediol (1,2-PD) with the appearance of bacterial microcompartments (BMC) in its cytoplasm. The 1,2-PD-specific bacterial microcompartment (BMC) concentrates low levels of 1,2-PD catabolic enzymes, concentrates volatile reaction intermediates thus enhancing pathway flux and keeps the level of toxic, mutagenic propionaldehyde low. The chain is 1-propanol dehydrogenase PduQ from Citrobacter freundii.